The sequence spans 891 residues: DNA mismatch repair protein MutS (891 aa).

An ATP-binding site is contributed by 646–653 (GPNMAGKS).

This sequence belongs to the DNA mismatch repair MutS family.

This protein is involved in the repair of mismatches in DNA. It is possible that it carries out the mismatch recognition step. This protein has a weak ATPase activity. This Rickettsia massiliae (strain Mtu5) protein is DNA mismatch repair protein MutS.